Here is a 195-residue protein sequence, read N- to C-terminus: Large ribosomal subunit protein bL32m (195 aa).

The Zn(2+) site is built by C95, C98, C108, and C111.

This sequence belongs to the bacterial ribosomal protein bL32 family. As to quaternary structure, component of the mitochondrial large ribosomal subunit (mt-LSU).

The protein localises to the mitochondrion. Functionally, component of the mitochondrial large ribosomal subunit (mt-LSU). The mitochondrial ribosome (mitoribosome) is a large ribonucleoprotein complex responsible for the synthesis of proteins inside mitochondria. In Drosophila melanogaster (Fruit fly), this protein is Large ribosomal subunit protein bL32m (mRpL32).